The sequence spans 176 residues: MARLPKLAVFDLDYTLWPFWVDTHVDPPFHKSSDGTVRDRRGQDVRLYPEVPEVLKRLQSLGVPGAAASRTSEIEGANQLLELFDLFRYFVHREIYPGSKITHFERLQQKTGIPFSQMIFFDDERRNIVDVSKLGVTCIHIQNGMNLQTLSQGLETFAKAQTGPLRSSLEESPFEA.

Catalysis depends on Asp-11, which acts as the Nucleophile. Position 11 (Asp-11) interacts with Mg(2+). Phosphate contacts are provided by Leu-12 and Asp-13. Asp-13 contacts Mg(2+). Asp-13 acts as the Proton donor in catalysis. Position 20 (Trp-20) interacts with substrate. Ser-69, Arg-70, and Lys-100 together coordinate phosphate. Residue Arg-70 participates in substrate binding. Asp-123 lines the Mg(2+) pocket.

Belongs to the HAD-like hydrolase superfamily. It depends on Mg(2+) as a cofactor.

It catalyses the reaction O-phospho-L-tyrosyl-[protein] + H2O = L-tyrosyl-[protein] + phosphate. Its activity is regulated as follows. Inhibited by vanadate and zinc, and slightly by calcium. Functionally, magnesium-dependent phosphatase which may act as a tyrosine phosphatase. This chain is Magnesium-dependent phosphatase 1 (MDP1), found in Homo sapiens (Human).